The primary structure comprises 259 residues: Ribosomal RNA small subunit methyltransferase A (259 aa).

Residues Asn13, Leu15, Gly40, Glu61, Asp85, and Asn103 each coordinate S-adenosyl-L-methionine.

This sequence belongs to the class I-like SAM-binding methyltransferase superfamily. rRNA adenine N(6)-methyltransferase family. RsmA subfamily.

Its subcellular location is the cytoplasm. It carries out the reaction adenosine(1518)/adenosine(1519) in 16S rRNA + 4 S-adenosyl-L-methionine = N(6)-dimethyladenosine(1518)/N(6)-dimethyladenosine(1519) in 16S rRNA + 4 S-adenosyl-L-homocysteine + 4 H(+). Its function is as follows. Specifically dimethylates two adjacent adenosines (A1518 and A1519) in the loop of a conserved hairpin near the 3'-end of 16S rRNA in the 30S particle. May play a critical role in biogenesis of 30S subunits. The chain is Ribosomal RNA small subunit methyltransferase A from Neisseria gonorrhoeae (strain NCCP11945).